The chain runs to 451 residues: TERF1-interacting nuclear factor 2 (451 aa).

Ala2 is modified (N-acetylalanine). The segment at 229–257 (NPLPKAKPGTHLPQGPSSRTHPEPLAGRH) is disordered. The TBM motif lies at 256 to 278 (RHFNLAPLGRRRVQSQWASTRGG). Positions 262 to 268 (PLGRRRV) match the Nuclear localization signal motif. Ser295 carries the phosphoserine modification. Glycyl lysine isopeptide (Lys-Gly) (interchain with G-Cter in SUMO2) cross-links involve residues Lys302, Lys306, Lys341, and Lys353.

Monomer. Found in a complex with POT1; TERF1 and TNKS1. Component of the shelterin complex (telosome) composed of TERF1, TERF2, TINF2, TERF2IP ACD and POT1. Interacts with TERF1, TERF2 and ACD. As to expression, detected in heart, brain, placenta, lung, liver, skeletal muscle, kidney and pancreas.

Its subcellular location is the nucleus. It localises to the chromosome. The protein resides in the telomere. It is found in the nucleus matrix. Functionally, component of the shelterin complex (telosome) that is involved in the regulation of telomere length and protection. Shelterin associates with arrays of double-stranded TTAGGG repeats added by telomerase and protects chromosome ends; without its protective activity, telomeres are no longer hidden from the DNA damage surveillance and chromosome ends are inappropriately processed by DNA repair pathways. Plays a role in shelterin complex assembly. Isoform 1 may have additional role in tethering telomeres to the nuclear matrix. The polypeptide is TERF1-interacting nuclear factor 2 (TINF2) (Homo sapiens (Human)).